Consider the following 96-residue polypeptide: Large ribosomal subunit protein bL28 (96 aa).

It belongs to the bacterial ribosomal protein bL28 family.

The chain is Large ribosomal subunit protein bL28 from Parvibaculum lavamentivorans (strain DS-1 / DSM 13023 / NCIMB 13966).